Consider the following 816-residue polypeptide: Probable disease resistance protein At4g33300 (816 aa).

Residues 1 to 149 (MAITDFFAGE…SLDRVIQQVG (149 aa)) enclose the RPW8 domain. Residues 95–111 (TLARKMEKLEKTISNFL) adopt a coiled-coil conformation. In terms of domain architecture, NB-ARC spans 191–443 (VKKMMFESQG…LDVLINIWIE (253 aa)). Residue 207 to 214 (GMGGVGKT) coordinates ATP. Residues 399–415 (SRLLRQMEASLDNLDQT) are a coiled coil. 4 LRR repeats span residues 681–704 (SLSC…SKLQ), 705–727 (ALEI…ICEL), 729–751 (GLKY…IGKL), and 753–774 (KLEK…AVSL).

The protein belongs to the disease resistance NB-LRR family.

Its function is as follows. Probable disease resistance protein. This chain is Probable disease resistance protein At4g33300, found in Arabidopsis thaliana (Mouse-ear cress).